We begin with the raw amino-acid sequence, 171 residues long: Putative adenylate kinase (171 aa).

Residues G9, G11, K12, T13, and T14 each contribute to the ATP site. Residues 28 to 51 (SLGELIRQKGFVLGRDPIRGYLEA) form an NMP region. The interval 99–109 (GRGYPEGKVLE) is LID. Position 100 (R100) interacts with ATP.

It belongs to the adenylate kinase family. AK6 subfamily. As to quaternary structure, interacts with uS11. Not a structural component of 40S pre-ribosomes, but transiently interacts with them by binding to uS11.

It carries out the reaction AMP + ATP = 2 ADP. It catalyses the reaction ATP + H2O = ADP + phosphate + H(+). Functionally, broad-specificity nucleoside monophosphate (NMP) kinase that catalyzes the reversible transfer of the terminal phosphate group between nucleoside triphosphates and monophosphates. Also has ATPase activity. Involved in the late maturation steps of the 30S ribosomal particles, specifically 16S rRNA maturation. While NMP activity is not required for ribosome maturation, ATPase activity is. Associates transiently with small ribosomal subunit protein uS11. ATP hydrolysis breaks the interaction with uS11. May temporarily remove uS11 from the ribosome to enable a conformational change of the ribosomal RNA that is needed for the final maturation step of the small ribosomal subunit. The sequence is that of Putative adenylate kinase from Methanothermobacter thermautotrophicus (strain ATCC 29096 / DSM 1053 / JCM 10044 / NBRC 100330 / Delta H) (Methanobacterium thermoautotrophicum).